A 366-amino-acid chain; its full sequence is Chorismate synthase (366 aa).

The NADP(+) site is built by Arg-48 and Arg-54. FMN contacts are provided by residues 125–127 (RSS), 241–242 (NA), Gly-285, 300–304 (KPTSS), and Arg-326.

This sequence belongs to the chorismate synthase family. Homotetramer. FMNH2 is required as a cofactor.

The enzyme catalyses 5-O-(1-carboxyvinyl)-3-phosphoshikimate = chorismate + phosphate. Its pathway is metabolic intermediate biosynthesis; chorismate biosynthesis; chorismate from D-erythrose 4-phosphate and phosphoenolpyruvate: step 7/7. Functionally, catalyzes the anti-1,4-elimination of the C-3 phosphate and the C-6 proR hydrogen from 5-enolpyruvylshikimate-3-phosphate (EPSP) to yield chorismate, which is the branch point compound that serves as the starting substrate for the three terminal pathways of aromatic amino acid biosynthesis. This reaction introduces a second double bond into the aromatic ring system. The chain is Chorismate synthase from Cereibacter sphaeroides (strain ATCC 17029 / ATH 2.4.9) (Rhodobacter sphaeroides).